A 220-amino-acid chain; its full sequence is Deoxyribose-phosphate aldolase (220 aa).

D89 acts as the Proton donor/acceptor in catalysis. K151 acts as the Schiff-base intermediate with acetaldehyde in catalysis. Residue K180 is the Proton donor/acceptor of the active site.

Belongs to the DeoC/FbaB aldolase family. DeoC type 1 subfamily.

It localises to the cytoplasm. It carries out the reaction 2-deoxy-D-ribose 5-phosphate = D-glyceraldehyde 3-phosphate + acetaldehyde. The protein operates within carbohydrate degradation; 2-deoxy-D-ribose 1-phosphate degradation; D-glyceraldehyde 3-phosphate and acetaldehyde from 2-deoxy-alpha-D-ribose 1-phosphate: step 2/2. Functionally, catalyzes a reversible aldol reaction between acetaldehyde and D-glyceraldehyde 3-phosphate to generate 2-deoxy-D-ribose 5-phosphate. The chain is Deoxyribose-phosphate aldolase from Staphylococcus epidermidis (strain ATCC 35984 / DSM 28319 / BCRC 17069 / CCUG 31568 / BM 3577 / RP62A).